The following is a 485-amino-acid chain: DNA polymerase subunit gamma-2 (485 aa).

Positions 28–65 (GQPELLTERSSPKGGHVKSHAELEGNGEHPEAPGSGEG) are disordered. Position 38 is a phosphoserine (Ser-38). Positions 46-58 (SHAELEGNGEHPE) are enriched in basic and acidic residues.

In terms of assembly, heterotrimer composed of a catalytic subunit and a homodimer of accessory subunits (POLG:POLG2).

It is found in the mitochondrion. It localises to the mitochondrion matrix. Its subcellular location is the mitochondrion nucleoid. Accessory subunit of DNA polymerase gamma solely responsible for replication of mitochondrial DNA (mtDNA). Acts as an allosteric regulator of the holoenzyme activities. Enhances the polymerase activity and the processivity of POLG by increasing its interactions with the DNA template. Suppresses POLG exonucleolytic proofreading especially toward homopolymeric templates bearing mismatched termini. Binds to single-stranded DNA. This is DNA polymerase subunit gamma-2 from Homo sapiens (Human).